An 85-amino-acid polypeptide reads, in one-letter code: Cell division protein ZapA (85 aa).

Positions 60–85 (AVNVVHDYLKLKEQYEKLEIQLKEKE) form a coiled coil.

It belongs to the ZapA family. Type 2 subfamily. As to quaternary structure, homodimer. Interacts with FtsZ.

It is found in the cytoplasm. Its function is as follows. Activator of cell division through the inhibition of FtsZ GTPase activity, therefore promoting FtsZ assembly into bundles of protofilaments necessary for the formation of the division Z ring. It is recruited early at mid-cell but it is not essential for cell division. The chain is Cell division protein ZapA from Bacillus pumilus (strain SAFR-032).